The following is a 78-amino-acid chain: Large ribosomal subunit protein bL28 (78 aa).

Residues 1–23 form a disordered region; that stretch reads MSRKCQITGKKANNAMAVSHSHR.

Belongs to the bacterial ribosomal protein bL28 family.

This is Large ribosomal subunit protein bL28 from Picosynechococcus sp. (strain ATCC 27264 / PCC 7002 / PR-6) (Agmenellum quadruplicatum).